A 454-amino-acid polypeptide reads, in one-letter code: Bifunctional protein GlmU (454 aa).

Residues Met-1 to Arg-232 are pyrophosphorylase. Residues Leu-11–Gly-14, Lys-25, Gln-78, and Gly-83–Thr-84 each bind UDP-N-acetyl-alpha-D-glucosamine. Position 108 (Asp-108) interacts with Mg(2+). Positions 144, 158, 173, and 230 each coordinate UDP-N-acetyl-alpha-D-glucosamine. Residue Asn-230 participates in Mg(2+) binding. A linker region spans residues Ala-233–Ser-253. The tract at residues Gly-254–Lys-454 is N-acetyltransferase. UDP-N-acetyl-alpha-D-glucosamine contacts are provided by Arg-319 and Lys-337. His-349 functions as the Proton acceptor in the catalytic mechanism. 2 residues coordinate UDP-N-acetyl-alpha-D-glucosamine: Tyr-352 and Asn-363. Acetyl-CoA is bound by residues Ala-366, Asn-372–Tyr-373, Ser-391, Ser-409, and Arg-426.

The protein in the N-terminal section; belongs to the N-acetylglucosamine-1-phosphate uridyltransferase family. It in the C-terminal section; belongs to the transferase hexapeptide repeat family. Homotrimer. Mg(2+) serves as cofactor.

It is found in the cytoplasm. The enzyme catalyses alpha-D-glucosamine 1-phosphate + acetyl-CoA = N-acetyl-alpha-D-glucosamine 1-phosphate + CoA + H(+). It carries out the reaction N-acetyl-alpha-D-glucosamine 1-phosphate + UTP + H(+) = UDP-N-acetyl-alpha-D-glucosamine + diphosphate. It functions in the pathway nucleotide-sugar biosynthesis; UDP-N-acetyl-alpha-D-glucosamine biosynthesis; N-acetyl-alpha-D-glucosamine 1-phosphate from alpha-D-glucosamine 6-phosphate (route II): step 2/2. The protein operates within nucleotide-sugar biosynthesis; UDP-N-acetyl-alpha-D-glucosamine biosynthesis; UDP-N-acetyl-alpha-D-glucosamine from N-acetyl-alpha-D-glucosamine 1-phosphate: step 1/1. It participates in bacterial outer membrane biogenesis; LPS lipid A biosynthesis. Catalyzes the last two sequential reactions in the de novo biosynthetic pathway for UDP-N-acetylglucosamine (UDP-GlcNAc). The C-terminal domain catalyzes the transfer of acetyl group from acetyl coenzyme A to glucosamine-1-phosphate (GlcN-1-P) to produce N-acetylglucosamine-1-phosphate (GlcNAc-1-P), which is converted into UDP-GlcNAc by the transfer of uridine 5-monophosphate (from uridine 5-triphosphate), a reaction catalyzed by the N-terminal domain. This chain is Bifunctional protein GlmU, found in Brucella canis (strain ATCC 23365 / NCTC 10854 / RM-666).